The following is a 1009-amino-acid chain: Probable beta-galactosidase B (1009 aa).

The signal sequence occupies residues 1 to 21; that stretch reads MAQLFTKIIVYFLLFASPLLA. Residue asparagine 28 is glycosylated (N-linked (GlcNAc...) asparagine). Tyrosine 85 is a binding site for substrate. N-linked (GlcNAc...) asparagine glycosylation is present at asparagine 95. Residues asparagine 130, alanine 131, glutamate 132, and asparagine 190 each coordinate substrate. Catalysis depends on glutamate 191, which acts as the Proton donor. N-linked (GlcNAc...) asparagine glycosylation is present at asparagine 247. Position 260 (tyrosine 260) interacts with substrate. A disulfide bridge links cysteine 266 with cysteine 319. Glutamate 303 (nucleophile) is an active-site residue. Tyrosine 368 provides a ligand contact to substrate. N-linked (GlcNAc...) asparagine glycans are attached at residues asparagine 375, asparagine 406, asparagine 427, asparagine 451, asparagine 682, asparagine 740, asparagine 771, asparagine 784, asparagine 826, and asparagine 883.

It belongs to the glycosyl hydrolase 35 family.

The protein localises to the secreted. The catalysed reaction is Hydrolysis of terminal non-reducing beta-D-galactose residues in beta-D-galactosides.. In terms of biological role, cleaves beta-linked terminal galactosyl residues from gangliosides, glycoproteins, and glycosaminoglycans. In Talaromyces marneffei (strain ATCC 18224 / CBS 334.59 / QM 7333) (Penicillium marneffei), this protein is Probable beta-galactosidase B (lacB).